The sequence spans 499 residues: Glucose-6-phosphate isomerase (499 aa).

Glu352 functions as the Proton donor in the catalytic mechanism. Catalysis depends on residues His383 and Lys487.

It belongs to the GPI family.

Its subcellular location is the cytoplasm. The catalysed reaction is alpha-D-glucose 6-phosphate = beta-D-fructose 6-phosphate. Its pathway is carbohydrate biosynthesis; gluconeogenesis. The protein operates within carbohydrate degradation; glycolysis; D-glyceraldehyde 3-phosphate and glycerone phosphate from D-glucose: step 2/4. Catalyzes the reversible isomerization of glucose-6-phosphate to fructose-6-phosphate. The sequence is that of Glucose-6-phosphate isomerase from Legionella pneumophila (strain Paris).